The chain runs to 383 residues: S-adenosylmethionine synthase (383 aa).

ATP is bound at residue His-15. Asp-17 is a binding site for Mg(2+). Glu-43 is a K(+) binding site. Residues Glu-56 and Gln-99 each coordinate L-methionine. The interval 99 to 109 (QSPDINQGVDR) is flexible loop. Residues 164–166 (DAK), 230–231 (RF), Asp-239, 245–246 (RK), Ala-262, and Lys-266 contribute to the ATP site. Position 239 (Asp-239) interacts with L-methionine. Lys-270 contacts L-methionine.

The protein belongs to the AdoMet synthase family. In terms of assembly, homotetramer; dimer of dimers. Mg(2+) is required as a cofactor. K(+) serves as cofactor.

It localises to the cytoplasm. The catalysed reaction is L-methionine + ATP + H2O = S-adenosyl-L-methionine + phosphate + diphosphate. Its pathway is amino-acid biosynthesis; S-adenosyl-L-methionine biosynthesis; S-adenosyl-L-methionine from L-methionine: step 1/1. Functionally, catalyzes the formation of S-adenosylmethionine (AdoMet) from methionine and ATP. The overall synthetic reaction is composed of two sequential steps, AdoMet formation and the subsequent tripolyphosphate hydrolysis which occurs prior to release of AdoMet from the enzyme. The sequence is that of S-adenosylmethionine synthase from Pseudoalteromonas translucida (strain TAC 125).